The sequence spans 276 residues: 4-deoxy-L-threo-5-hexosulose-uronate ketol-isomerase (276 aa).

Residues H194, H196, E201, and H243 each contribute to the Zn(2+) site.

The protein belongs to the KduI family. Requires Zn(2+) as cofactor.

It catalyses the reaction 5-dehydro-4-deoxy-D-glucuronate = 3-deoxy-D-glycero-2,5-hexodiulosonate. Its pathway is glycan metabolism; pectin degradation; 2-dehydro-3-deoxy-D-gluconate from pectin: step 4/5. Catalyzes the isomerization of 5-dehydro-4-deoxy-D-glucuronate to 3-deoxy-D-glycero-2,5-hexodiulosonate. The polypeptide is 4-deoxy-L-threo-5-hexosulose-uronate ketol-isomerase (Halalkalibacterium halodurans (strain ATCC BAA-125 / DSM 18197 / FERM 7344 / JCM 9153 / C-125) (Bacillus halodurans)).